A 110-amino-acid polypeptide reads, in one-letter code: MQNEKGKNWDESRHDAVIIPKMRSKLQKPKLYRVFLFNDDYTPMDFVVFVLKNFFKKSFEEATHIMLNVHQNGVGECGIYSYEVAEMKVIQVRECAHQNEHPLQCVMEWK.

It belongs to the ClpS family. Binds to the N-terminal domain of the chaperone ClpA.

Its function is as follows. Involved in the modulation of the specificity of the ClpAP-mediated ATP-dependent protein degradation. The protein is ATP-dependent Clp protease adapter protein ClpS of Bartonella quintana (strain Toulouse) (Rochalimaea quintana).